Consider the following 261-residue polypeptide: V-type proton ATPase subunit D (261 aa).

S241 is modified (phosphoserine).

It belongs to the V-ATPase D subunit family. In terms of assembly, V-ATPase is a heteromultimeric enzyme composed of a peripheral catalytic V1 complex (components A to H) attached to an integral membrane V0 proton pore complex (components: a, c, c'', d and e).

Its subcellular location is the vacuole membrane. Functionally, subunit of the peripheral V1 complex of vacuolar ATPase. V-ATPase is responsible for acidifying a variety of intracellular compartments in eukaryotic cells, thus providing most of the energy required for transport processes in the vacuolar system. The polypeptide is V-type proton ATPase subunit D (VHA-D) (Arabidopsis thaliana (Mouse-ear cress)).